Reading from the N-terminus, the 474-residue chain is Bifunctional protein HldE (474 aa).

Positions 1 to 318 (MKLSMPRFDQ…RAIQREEGSE (318 aa)) are ribokinase. 194-197 (NLSE) provides a ligand contact to ATP. Residue aspartate 263 is part of the active site. The cytidylyltransferase stretch occupies residues 343–474 (FTNGCFDILH…AIVEKIRGQG (132 aa)).

The protein in the N-terminal section; belongs to the carbohydrate kinase PfkB family. In the C-terminal section; belongs to the cytidylyltransferase family. Homodimer.

It catalyses the reaction D-glycero-beta-D-manno-heptose 7-phosphate + ATP = D-glycero-beta-D-manno-heptose 1,7-bisphosphate + ADP + H(+). It carries out the reaction D-glycero-beta-D-manno-heptose 1-phosphate + ATP + H(+) = ADP-D-glycero-beta-D-manno-heptose + diphosphate. It functions in the pathway nucleotide-sugar biosynthesis; ADP-L-glycero-beta-D-manno-heptose biosynthesis; ADP-L-glycero-beta-D-manno-heptose from D-glycero-beta-D-manno-heptose 7-phosphate: step 1/4. The protein operates within nucleotide-sugar biosynthesis; ADP-L-glycero-beta-D-manno-heptose biosynthesis; ADP-L-glycero-beta-D-manno-heptose from D-glycero-beta-D-manno-heptose 7-phosphate: step 3/4. Its function is as follows. Catalyzes the phosphorylation of D-glycero-D-manno-heptose 7-phosphate at the C-1 position to selectively form D-glycero-beta-D-manno-heptose-1,7-bisphosphate. Catalyzes the ADP transfer from ATP to D-glycero-beta-D-manno-heptose 1-phosphate, yielding ADP-D-glycero-beta-D-manno-heptose. The chain is Bifunctional protein HldE from Pseudomonas syringae pv. tomato (strain ATCC BAA-871 / DC3000).